Reading from the N-terminus, the 58-residue chain is Large ribosomal subunit protein eL20 (58 aa).

The disordered stretch occupies residues 37-58 (TTVGSQHNRKRPQIEIKEVSAA). Over residues 48 to 58 (PQIEIKEVSAA) the composition is skewed to basic and acidic residues.

The protein belongs to the eukaryotic ribosomal protein eL20 family. In terms of assembly, part of the 50S ribosomal subunit. Binds 23S rRNA.

The protein is Large ribosomal subunit protein eL20 of Halorubrum lacusprofundi (strain ATCC 49239 / DSM 5036 / JCM 8891 / ACAM 34).